The chain runs to 1044 residues: Probable pre-mRNA-splicing factor ATP-dependent RNA helicase DEAH6 (1044 aa).

Disordered stretches follow at residues 99–134 (EADH…SEQL) and 152–211 (RRKV…VRRD). Positions 157–167 (EDEDDGTESEE) are enriched in acidic residues. Basic and acidic residues predominate over residues 168–211 (ERLRDQREREELEQHLRERDTARTRKLTEPKMSKKEQEEFVRRD). Residues 414–577 (LNAVKDHQVL…FDQAPIFRFP (164 aa)) enclose the Helicase ATP-binding domain. Position 427-434 (427-434 (GETGSGKT)) interacts with ATP. The short motif at 524–527 (DEAH) is the DEAH box element. A Helicase C-terminal domain is found at 599–775 (AITTVLTIHV…SVVLSLKSLG (177 aa)).

The protein belongs to the DEAD box helicase family. DEAH subfamily. PRP2 sub-subfamily. As to expression, predominantly expressed in flowers.

It catalyses the reaction ATP + H2O = ADP + phosphate + H(+). Its function is as follows. May be involved in pre-mRNA splicing. The sequence is that of Probable pre-mRNA-splicing factor ATP-dependent RNA helicase DEAH6 from Arabidopsis thaliana (Mouse-ear cress).